The chain runs to 300 residues: F-box protein SKIP1 (300 aa).

One can recognise an F-box; degenerate domain in the interval 11 to 52; sequence LAPEILINIISRLTIQELWTGPMFVQKSWLTVCRDPYLWSIF.

In terms of assembly, part of a SCF (ASK-cullin-F-box) protein ligase complex. Interacts with SKP1A/ASK1 and SKP1B/ASK2.

It localises to the nucleus. Its pathway is protein modification; protein ubiquitination. In terms of biological role, component of SCF(ASK-cullin-F-box) E3 ubiquitin ligase complexes, which may mediate the ubiquitination and subsequent proteasomal degradation of target proteins. This is F-box protein SKIP1 (SKIP1) from Arabidopsis thaliana (Mouse-ear cress).